A 1888-amino-acid polypeptide reads, in one-letter code: E3 ubiquitin-protein ligase UBR3 (1888 aa).

The interval Met1–Leu24 is disordered. Residues Ala118–Ile189 form a UBR-type zinc finger. The interval Gly339–Lys362 is disordered. A phosphoserine mark is found at Ser343 and Ser344. 2 helical membrane passes run Met761–Met781 and Leu919–Asp939. 2 disordered regions span residues Ala1008 to Gln1028 and Val1164 to Ala1186. A compositionally biased stretch (polar residues) spans Pro1016 to Gln1028. Residues Lys1168–Ser1199 are a coiled coil. A compositionally biased stretch (basic and acidic residues) spans Thr1170–Ala1186. The residue at position 1199 (Ser1199) is a Phosphoserine. The segment at Asp1306–Arg1364 adopts an RING-type; degenerate zinc-finger fold. The chain crosses the membrane as a helical span at residues Gln1806–Ile1826.

This sequence belongs to the E3 ubiquitin-protein ligase UBR1-like family. In terms of assembly, interacts with UBE2A and UBE2B.

Its subcellular location is the membrane. It carries out the reaction S-ubiquitinyl-[E2 ubiquitin-conjugating enzyme]-L-cysteine + [acceptor protein]-L-lysine = [E2 ubiquitin-conjugating enzyme]-L-cysteine + N(6)-ubiquitinyl-[acceptor protein]-L-lysine.. It functions in the pathway protein modification; protein ubiquitination. In terms of biological role, E3 ubiquitin-protein ligase which is a component of the N-end rule pathway. Does not bind to proteins bearing specific N-terminal residues that are destabilizing according to the N-end rule, leading to their ubiquitination and subsequent degradation. May play a role in Shh signaling by mediating the ubiquitination of Kif7. May be important for MYH9 function in certain tissues, possibly by regulating the ubiquitination of MYH9 and consequently affecting its interaction with MYO7A. The sequence is that of E3 ubiquitin-protein ligase UBR3 (UBR3) from Homo sapiens (Human).